The chain runs to 288 residues: 4-hydroxy-3-methylbut-2-enyl diphosphate reductase (288 aa).

[4Fe-4S] cluster is bound at residue cysteine 12. (2E)-4-hydroxy-3-methylbut-2-enyl diphosphate is bound by residues histidine 42 and histidine 77. Positions 42 and 77 each coordinate dimethylallyl diphosphate. The isopentenyl diphosphate site is built by histidine 42 and histidine 77. Cysteine 99 provides a ligand contact to [4Fe-4S] cluster. Histidine 127 provides a ligand contact to (2E)-4-hydroxy-3-methylbut-2-enyl diphosphate. Histidine 127 is a dimethylallyl diphosphate binding site. Histidine 127 provides a ligand contact to isopentenyl diphosphate. The active-site Proton donor is the glutamate 129. Residue threonine 165 participates in (2E)-4-hydroxy-3-methylbut-2-enyl diphosphate binding. Position 193 (cysteine 193) interacts with [4Fe-4S] cluster. (2E)-4-hydroxy-3-methylbut-2-enyl diphosphate-binding residues include serine 221, serine 222, asparagine 223, and serine 265. Residues serine 221, serine 222, asparagine 223, and serine 265 each coordinate dimethylallyl diphosphate. Positions 221, 222, 223, and 265 each coordinate isopentenyl diphosphate.

This sequence belongs to the IspH family. The cofactor is [4Fe-4S] cluster.

It catalyses the reaction isopentenyl diphosphate + 2 oxidized [2Fe-2S]-[ferredoxin] + H2O = (2E)-4-hydroxy-3-methylbut-2-enyl diphosphate + 2 reduced [2Fe-2S]-[ferredoxin] + 2 H(+). The enzyme catalyses dimethylallyl diphosphate + 2 oxidized [2Fe-2S]-[ferredoxin] + H2O = (2E)-4-hydroxy-3-methylbut-2-enyl diphosphate + 2 reduced [2Fe-2S]-[ferredoxin] + 2 H(+). The protein operates within isoprenoid biosynthesis; dimethylallyl diphosphate biosynthesis; dimethylallyl diphosphate from (2E)-4-hydroxy-3-methylbutenyl diphosphate: step 1/1. It functions in the pathway isoprenoid biosynthesis; isopentenyl diphosphate biosynthesis via DXP pathway; isopentenyl diphosphate from 1-deoxy-D-xylulose 5-phosphate: step 6/6. Its function is as follows. Catalyzes the conversion of 1-hydroxy-2-methyl-2-(E)-butenyl 4-diphosphate (HMBPP) into a mixture of isopentenyl diphosphate (IPP) and dimethylallyl diphosphate (DMAPP). Acts in the terminal step of the DOXP/MEP pathway for isoprenoid precursor biosynthesis. In Thermoanaerobacter pseudethanolicus (strain ATCC 33223 / 39E) (Clostridium thermohydrosulfuricum), this protein is 4-hydroxy-3-methylbut-2-enyl diphosphate reductase.